Here is a 253-residue protein sequence, read N- to C-terminus: Large ribosomal subunit protein uL4 (253 aa).

It belongs to the universal ribosomal protein uL4 family. In terms of assembly, part of the 50S ribosomal subunit.

One of the primary rRNA binding proteins, this protein initially binds near the 5'-end of the 23S rRNA. It is important during the early stages of 50S assembly. It makes multiple contacts with different domains of the 23S rRNA in the assembled 50S subunit and ribosome. Functionally, forms part of the polypeptide exit tunnel. This is Large ribosomal subunit protein uL4 from Methanococcoides burtonii (strain DSM 6242 / NBRC 107633 / OCM 468 / ACE-M).